A 122-amino-acid polypeptide reads, in one-letter code: Acyl carrier protein 1, mitochondrial (122 aa).

The N-terminal 34 residues, 1-34, are a transit peptide targeting the mitochondrion; it reads MALRNAILRHLRVPVQTLGLNQSKIGFLGTIRSF. Residues 44–119 form the Carrier domain; the sequence is EAVVDRVLDV…LAIEYVYNHP (76 aa). Ser-79 carries the O-(pantetheine 4'-phosphoryl)serine modification.

The protein belongs to the acyl carrier protein (ACP) family. Complex I is composed of at least 49 different subunits. In terms of processing, 4'-phosphopantetheine is transferred from CoA to a specific serine of the apo-ACP-like protein.

It localises to the mitochondrion. It functions in the pathway lipid metabolism; fatty acid biosynthesis. Functionally, carrier of the growing fatty acid chain in fatty acid biosynthesis. May be involved in the synthesis of short and medium chain fatty acids. Accessory and non-catalytic subunit of the mitochondrial membrane respiratory chain NADH dehydrogenase (Complex I), which functions in the transfer of electrons from NADH to the respiratory chain. The polypeptide is Acyl carrier protein 1, mitochondrial (MTACP1) (Arabidopsis thaliana (Mouse-ear cress)).